A 261-amino-acid chain; its full sequence is Transmembrane protein 106A (261 aa).

Residues 1–23 (MGKAVSQLTSRKDEDKPILPDNP) are disordered. A helical transmembrane segment spans residues 93-113 (LFVFLSVAICLLIFSLTIFFL).

Belongs to the TMEM106 family. In terms of tissue distribution, expressed in liver, spleen, lung, kidney, lymph nodes and adipose tissue (at protein level). Expressed by macrophages.

It localises to the cell membrane. In terms of biological role, activates macrophages and polarizes them into M1-like macrophages through the activation of the MAPK and NF-kappaB signaling pathway. Upon activation, up-regulates the expression of CD80, CD86, CD69 and MHC II on macrophages, and induces the release of pro-inflammatory cytokines such as TNF, IL1B, IL6, CCL2 and nitric oxide. May play a role in inhibition of proliferation and migration. In Mus musculus (Mouse), this protein is Transmembrane protein 106A (Tmem106a).